Here is a 490-residue protein sequence, read N- to C-terminus: Betaine aldehyde dehydrogenase (490 aa).

Residues Ser26, Ile27, and Asp93 each contribute to the K(+) site. NAD(+) is bound at residue 150–152 (GAW). Lys162 functions as the Charge relay system in the catalytic mechanism. 176-179 (KPSE) contacts NAD(+). Val180 provides a ligand contact to K(+). 230 to 233 (GVAT) is a binding site for NAD(+). Leu246 lines the K(+) pocket. Glu252 serves as the catalytic Proton acceptor. 3 residues coordinate NAD(+): Gly254, Cys286, and Glu387. Cys286 serves as the catalytic Nucleophile. Cys286 bears the Cysteine sulfenic acid (-SOH) mark. 2 residues coordinate K(+): Lys457 and Gly460. Residue Glu464 is the Charge relay system of the active site.

Belongs to the aldehyde dehydrogenase family. As to quaternary structure, dimer of dimers. Requires K(+) as cofactor.

The enzyme catalyses betaine aldehyde + NAD(+) + H2O = glycine betaine + NADH + 2 H(+). It functions in the pathway amine and polyamine biosynthesis; betaine biosynthesis via choline pathway; betaine from betaine aldehyde: step 1/1. Involved in the biosynthesis of the osmoprotectant glycine betaine. Catalyzes the irreversible oxidation of betaine aldehyde to the corresponding acid. In Stutzerimonas stutzeri (strain A1501) (Pseudomonas stutzeri), this protein is Betaine aldehyde dehydrogenase.